The following is a 450-amino-acid chain: Glutamyl-tRNA(Gln) amidotransferase subunit A, mitochondrial (450 aa).

Active-site charge relay system residues include Lys-47 and Ser-122. The active-site Acyl-ester intermediate is Ser-146.

Belongs to the amidase family. GatA subfamily. In terms of assembly, subunit of the heterotrimeric GatFAB amidotransferase (AdT) complex, composed of A, B and F subunits.

The protein localises to the mitochondrion. It catalyses the reaction L-glutamyl-tRNA(Gln) + L-glutamine + ATP + H2O = L-glutaminyl-tRNA(Gln) + L-glutamate + ADP + phosphate + H(+). Functionally, allows the formation of correctly charged Gln-tRNA(Gln) through the transamidation of misacylated Glu-tRNA(Gln) in the mitochondria. The reaction takes place in the presence of glutamine and ATP through an activated gamma-phospho-Glu-tRNA(Gln). The polypeptide is Glutamyl-tRNA(Gln) amidotransferase subunit A, mitochondrial (Candida albicans (strain SC5314 / ATCC MYA-2876) (Yeast)).